We begin with the raw amino-acid sequence, 276 residues long: Rhomboid protease GlpG (276 aa).

The next 6 membrane-spanning stretches (helical) occupy residues 94-114 (GPVT…MSLI), 142-162 (IFMH…WYLG), 169-189 (LGSG…GYVQ), 192-212 (FSGP…GYVW), 229-249 (LIIF…GMSM), and 250-270 (ANGA…VDTL). Ser-201 functions as the Nucleophile in the catalytic mechanism. His-254 is a catalytic residue.

This sequence belongs to the peptidase S54 family.

The protein localises to the cell inner membrane. It carries out the reaction Cleaves type-1 transmembrane domains using a catalytic dyad composed of serine and histidine that are contributed by different transmembrane domains.. Rhomboid-type serine protease that catalyzes intramembrane proteolysis. In Salmonella choleraesuis (strain SC-B67), this protein is Rhomboid protease GlpG.